We begin with the raw amino-acid sequence, 80 residues long: Cell division activator CedA (80 aa).

Belongs to the CedA family.

In terms of biological role, activates the cell division inhibited by chromosomal DNA over-replication. This chain is Cell division activator CedA, found in Salmonella arizonae (strain ATCC BAA-731 / CDC346-86 / RSK2980).